A 137-amino-acid polypeptide reads, in one-letter code: MIEEKKERKKRRVLQMARFYGAAAFTLITMRLISRAIKVRKYVPSIFQQNYKLPPFSQRNEAMSALTYASAASIGTFSTLIFGFCWALDISTAREFVFKTREFMGVPQALETDTSMDEETSKLTKQLQDLLSSENNK.

A run of 2 helical transmembrane segments spans residues 20-37 (YGAA…SRAI) and 66-88 (LTYA…CWAL).

The protein belongs to the AIM11 family.

Its subcellular location is the membrane. This chain is Altered inheritance of mitochondria protein 11 (AIM11), found in Saccharomyces cerevisiae (strain YJM789) (Baker's yeast).